Consider the following 345-residue polypeptide: Hemin transport protein HmuS (345 aa).

To Y.enterocolitica HemS.

In terms of biological role, part of the binding-protein-dependent transport system for hemin. The polypeptide is Hemin transport protein HmuS (hmuS) (Yersinia pestis).